A 664-amino-acid chain; its full sequence is Chaperone protein DnaK (664 aa).

Thr201 bears the Phosphothreonine; by autocatalysis mark. Disordered regions lie at residues 516–538 (DAEK…NEAD) and 578–664 (APVE…KPND). A compositionally biased stretch (basic and acidic residues) spans 578 to 592 (APVEKIKDASEELSR). Low complexity-rich tracts occupy residues 600–617 (AMQS…ANAQ) and 638–649 (AGNSASSNSNNE).

It belongs to the heat shock protein 70 family.

Functionally, acts as a chaperone. The sequence is that of Chaperone protein DnaK from Chlamydia caviae (strain ATCC VR-813 / DSM 19441 / 03DC25 / GPIC) (Chlamydophila caviae).